The chain runs to 170 residues: MASLFSTLQRSLKGLLILVPVLIGLVLASPAEAVRWDAETLTVPGNPEGTQVTFSEQEINTGRKVFNTSCGTCHAGGITKTNQNVGLDPETLALATPARDNVDALVDYMKDPTSYDGEYSIADLHPSMRDAELYPAMRDLTDEELRLMAGYILVAPKVQGTAWGGGKIYF.

Positions 1-33 (MASLFSTLQRSLKGLLILVPVLIGLVLASPAEA) are cleaved as a signal peptide. Residues Cys70, Cys73, His74, and Met137 each contribute to the heme c site.

It belongs to the cytochrome c family. PsbV subfamily. PSII is composed of 1 copy each of membrane proteins PsbA, PsbB, PsbC, PsbD, PsbE, PsbF, PsbH, PsbI, PsbJ, PsbK, PsbL, PsbM, PsbT, PsbX, PsbY, PsbZ, Psb30/Ycf12, peripheral proteins PsbO, CyanoQ (PsbQ), PsbU, PsbV and a large number of cofactors. It forms dimeric complexes. The cofactor is heme c.

Its subcellular location is the cellular thylakoid membrane. In terms of biological role, one of the extrinsic, lumenal subunits of photosystem II (PSII). PSII is a light-driven water plastoquinone oxidoreductase, using light energy to abstract electrons from H(2)O, generating a proton gradient subsequently used for ATP formation. The extrinsic proteins stabilize the structure of photosystem II oxygen-evolving complex (OEC), the ion environment of oxygen evolution and protect the OEC against heat-induced inactivation. Low-potential cytochrome c that plays a role in the OEC of PSII. The protein is Photosystem II extrinsic protein V of Parasynechococcus marenigrum (strain WH8102).